The chain runs to 311 residues: Mediator of RNA polymerase II transcription subunit 27 (311 aa).

S132 is subject to Phosphoserine. N6-methyllysine is present on K134.

Belongs to the Mediator complex subunit 27 family. In terms of assembly, component of the Mediator complex, which is composed of MED1, MED4, MED6, MED7, MED8, MED9, MED10, MED11, MED12, MED13, MED13L, MED14, MED15, MED16, MED17, MED18, MED19, MED20, MED21, MED22, MED23, MED24, MED25, MED26, MED27, MED29, MED30, MED31, CCNC, CDK8 and CDC2L6/CDK11. The MED12, MED13, CCNC and CDK8 subunits form a distinct module termed the CDK8 module. Mediator containing the CDK8 module is less active than Mediator lacking this module in supporting transcriptional activation. Individual preparations of the Mediator complex lacking one or more distinct subunits have been variously termed ARC, CRSP, DRIP, PC2, SMCC and TRAP.

It localises to the nucleus. Functionally, component of the Mediator complex, a coactivator involved in the regulated transcription of nearly all RNA polymerase II-dependent genes. Mediator functions as a bridge to convey information from gene-specific regulatory proteins to the basal RNA polymerase II transcription machinery. Mediator is recruited to promoters by direct interactions with regulatory proteins and serves as a scaffold for the assembly of a functional preinitiation complex with RNA polymerase II and the general transcription factors. In Homo sapiens (Human), this protein is Mediator of RNA polymerase II transcription subunit 27 (MED27).